The sequence spans 466 residues: Adenosylhomocysteinase (466 aa).

Residues T57, D132, and E192 each contribute to the substrate site. 193 to 195 (TTT) is an NAD(+) binding site. Substrate is bound by residues K222 and D226. NAD(+) is bound by residues N227, 256 to 261 (GYGDVG), E279, N314, 335 to 337 (IGH), and N380.

The protein belongs to the adenosylhomocysteinase family. NAD(+) is required as a cofactor.

It localises to the cytoplasm. It carries out the reaction S-adenosyl-L-homocysteine + H2O = L-homocysteine + adenosine. Its pathway is amino-acid biosynthesis; L-homocysteine biosynthesis; L-homocysteine from S-adenosyl-L-homocysteine: step 1/1. Its function is as follows. May play a key role in the regulation of the intracellular concentration of adenosylhomocysteine. The chain is Adenosylhomocysteinase from Brucella abortus (strain S19).